Here is a 122-residue protein sequence, read N- to C-terminus: MFSLKVESEEGFCKIRLFPEHPEFSVGGYGRDDILVFKGAPVSLSAIQKMLEREFGDVIVNFRENSIEIEMQRMDCSLVIEDVASAIKEMMESAAKDLDKIEEVIKESLEKYLRRVGGDNGN.

Residues 79–114 (VIEDVASAIKEMMESAAKDLDKIEEVIKESLEKYLR) are a coiled coil.

This is an uncharacterized protein from Archaeoglobus fulgidus (strain ATCC 49558 / DSM 4304 / JCM 9628 / NBRC 100126 / VC-16).